The following is a 373-amino-acid chain: Chaperone protein DnaJ (373 aa).

The J domain maps to 4-68 (NYYQILGVSK…QKRAAYDRLG (65 aa)). The CR-type zinc finger occupies 136-214 (GIEKNINFSS…CHGMGRYHKQ (79 aa)). Residues Cys149, Cys152, Cys166, Cys169, Cys188, Cys191, Cys202, and Cys205 each coordinate Zn(2+). CXXCXGXG motif repeat units lie at residues 149 to 156 (CDTCHGSG), 166 to 173 (CDACSGVG), 188 to 195 (CHKCQGNG), and 202 to 209 (CKKCHGMG).

The protein belongs to the DnaJ family. In terms of assembly, homodimer. Zn(2+) is required as a cofactor.

It is found in the cytoplasm. Participates actively in the response to hyperosmotic and heat shock by preventing the aggregation of stress-denatured proteins and by disaggregating proteins, also in an autonomous, DnaK-independent fashion. Unfolded proteins bind initially to DnaJ; upon interaction with the DnaJ-bound protein, DnaK hydrolyzes its bound ATP, resulting in the formation of a stable complex. GrpE releases ADP from DnaK; ATP binding to DnaK triggers the release of the substrate protein, thus completing the reaction cycle. Several rounds of ATP-dependent interactions between DnaJ, DnaK and GrpE are required for fully efficient folding. Also involved, together with DnaK and GrpE, in the DNA replication of plasmids through activation of initiation proteins. This Rickettsia rickettsii (strain Iowa) protein is Chaperone protein DnaJ.